Consider the following 208-residue polypeptide: Uracil phosphoribosyltransferase (208 aa).

5-phospho-alpha-D-ribose 1-diphosphate-binding positions include Arg78, Arg103, and 130 to 138; that span reads DPMLATGGS. Uracil-binding positions include Ile193 and 198–200; that span reads GDA. Asp199 serves as a coordination point for 5-phospho-alpha-D-ribose 1-diphosphate.

The protein belongs to the UPRTase family. Mg(2+) is required as a cofactor.

It carries out the reaction UMP + diphosphate = 5-phospho-alpha-D-ribose 1-diphosphate + uracil. The protein operates within pyrimidine metabolism; UMP biosynthesis via salvage pathway; UMP from uracil: step 1/1. Allosterically activated by GTP. Catalyzes the conversion of uracil and 5-phospho-alpha-D-ribose 1-diphosphate (PRPP) to UMP and diphosphate. This is Uracil phosphoribosyltransferase from Sodalis glossinidius (strain morsitans).